Here is a 391-residue protein sequence, read N- to C-terminus: Formate-dependent phosphoribosylglycinamide formyltransferase (391 aa).

Residues 20–21 and glutamate 80 contribute to the N(1)-(5-phospho-beta-D-ribosyl)glycinamide site; that span reads EL. ATP contacts are provided by residues arginine 112, lysine 153, 158 to 163, 193 to 196, and glutamate 201; these read SSGKGQ and EGFV. The region spanning 117–306 is the ATP-grasp domain; sequence RLAAETLGLP…EFALHVRAIL (190 aa). Residues glutamate 265 and glutamate 277 each coordinate Mg(2+). Residues aspartate 284, lysine 354, and 361 to 362 each bind N(1)-(5-phospho-beta-D-ribosyl)glycinamide; that span reads RR.

Belongs to the PurK/PurT family. As to quaternary structure, homodimer.

The enzyme catalyses N(1)-(5-phospho-beta-D-ribosyl)glycinamide + formate + ATP = N(2)-formyl-N(1)-(5-phospho-beta-D-ribosyl)glycinamide + ADP + phosphate + H(+). Its pathway is purine metabolism; IMP biosynthesis via de novo pathway; N(2)-formyl-N(1)-(5-phospho-D-ribosyl)glycinamide from N(1)-(5-phospho-D-ribosyl)glycinamide (formate route): step 1/1. In terms of biological role, involved in the de novo purine biosynthesis. Catalyzes the transfer of formate to 5-phospho-ribosyl-glycinamide (GAR), producing 5-phospho-ribosyl-N-formylglycinamide (FGAR). Formate is provided by PurU via hydrolysis of 10-formyl-tetrahydrofolate. In Shewanella sp. (strain W3-18-1), this protein is Formate-dependent phosphoribosylglycinamide formyltransferase.